We begin with the raw amino-acid sequence, 268 residues long: Peptide transport system ATP-binding protein SapF (268 aa).

One can recognise an ABC transporter domain in the interval 6 to 251 (LEVRNLSKTF…PLHELTKRLI (246 aa)). 47–54 (GENGSGKS) contacts ATP.

Belongs to the ABC transporter superfamily.

The protein localises to the cell inner membrane. Involved in a peptide intake transport system that plays a role in the resistance to antimicrobial peptides. This chain is Peptide transport system ATP-binding protein SapF (sapF), found in Escherichia coli O6:H1 (strain CFT073 / ATCC 700928 / UPEC).